Reading from the N-terminus, the 190-residue chain is dTTP/UTP pyrophosphatase (190 aa).

The active-site Proton acceptor is D71.

This sequence belongs to the Maf family. YhdE subfamily. The cofactor is a divalent metal cation.

The protein localises to the cytoplasm. It carries out the reaction dTTP + H2O = dTMP + diphosphate + H(+). The enzyme catalyses UTP + H2O = UMP + diphosphate + H(+). Nucleoside triphosphate pyrophosphatase that hydrolyzes dTTP and UTP. May have a dual role in cell division arrest and in preventing the incorporation of modified nucleotides into cellular nucleic acids. This Xanthomonas oryzae pv. oryzae (strain MAFF 311018) protein is dTTP/UTP pyrophosphatase.